The following is a 487-amino-acid chain: Proline--tRNA ligase (487 aa).

It belongs to the class-II aminoacyl-tRNA synthetase family. ProS type 3 subfamily. Homodimer.

Its subcellular location is the cytoplasm. The enzyme catalyses tRNA(Pro) + L-proline + ATP = L-prolyl-tRNA(Pro) + AMP + diphosphate. In terms of biological role, catalyzes the attachment of proline to tRNA(Pro) in a two-step reaction: proline is first activated by ATP to form Pro-AMP and then transferred to the acceptor end of tRNA(Pro). In Pyrobaculum calidifontis (strain DSM 21063 / JCM 11548 / VA1), this protein is Proline--tRNA ligase.